The primary structure comprises 141 residues: Large ribosomal subunit protein uL11 (141 aa).

Belongs to the universal ribosomal protein uL11 family. In terms of assembly, part of the ribosomal stalk of the 50S ribosomal subunit. Interacts with L10 and the large rRNA to form the base of the stalk. L10 forms an elongated spine to which L12 dimers bind in a sequential fashion forming a multimeric L10(L12)X complex. In terms of processing, one or more lysine residues are methylated.

In terms of biological role, forms part of the ribosomal stalk which helps the ribosome interact with GTP-bound translation factors. This chain is Large ribosomal subunit protein uL11, found in Prochlorococcus marinus (strain NATL1A).